A 609-amino-acid polypeptide reads, in one-letter code: MYLILLVVLAVYVTYKLITTVLPHHLLIPSQNWREKISYVVKYPKPIYLKVGTKRSSYRRRLILASENPAFYTNFINNKLKISPNDCENGDGFLNEMSRRDIDDPKRRIIYGFFHPYANNGGGGERVLWQAVKATLLADDKNICVIYTTNIEAQPLDILNKANKKFQIDGLDHSRVVFIYLRKFNNLIDGNYWKHFTLIGQLFGGILLSLEAMYELSPDVWIDTMGLPSSYLLVSLSLKIPILAYTHFPILQEDMFGKLKFQKLKDLWKFNIIKFNDYFALGKFIYWSILYYFYVYLGSKVNIALANGSWTFNHLSKIWVFNTALGNVLDVLYPPCGTEFLIKQANLNQPRSNKLLYLAQFRPEKRHALLLKEYSNFLSNNFPNVTQITNKFPTLVFAGSCRTADDTATLKFLQEQVAKLDLSRFVEFRIDISYDEVVELLSSCKFGLNAMWNEHFGIGVVEYMARGCTPIVHASAGPLLDMIGRNDQQENCLNNWKTDGGFFFKSYDDPDLDPNLQKNTETGYIKFELFDQFIDYPTFETLLKELYVNDPTIIEDSKLLKMRQIDQNRVAEKFSNKAFNKKWIEYINDLNTLEKQYREEKRTKVEQVY.

Met1 is a topological domain (lumenal). A helical membrane pass occupies residues 2–22; sequence YLILLVVLAVYVTYKLITTVL. The Cytoplasmic portion of the chain corresponds to 23-195; the sequence is PHHLLIPSQN…NLIDGNYWKH (173 aa). The segment at residues 196 to 216 is an intramembrane region (helical); it reads FTLIGQLFGGILLSLEAMYEL. Residues 217–455 lie on the Cytoplasmic side of the membrane; it reads SPDVWIDTMG…FGLNAMWNEH (239 aa). Positions 456–476 form an intramembrane region, helical; the sequence is FGIGVVEYMARGCTPIVHASA. At 477-609 the chain is on the cytoplasmic side; that stretch reads GPLLDMIGRN…EKRTKVEQVY (133 aa).

Belongs to the glycosyltransferase group 1 family.

It is found in the endoplasmic reticulum membrane. The enzyme catalyses an alpha-D-Man-(1-&gt;3)-[alpha-D-Man-(1-&gt;6)]-beta-D-Man-(1-&gt;4)-beta-D-GlcNAc-(1-&gt;4)-alpha-D-GlcNAc-diphospho-di-trans,poly-cis-dolichol + 2 GDP-alpha-D-mannose = an alpha-D-Man-(1-&gt;2)-alpha-D-Man-(1-&gt;2)-alpha-D-Man-(1-&gt;3)-[alpha-D-Man-(1-&gt;6)]-beta-D-Man-(1-&gt;4)-beta-D-GlcNAc-(1-&gt;4)-alpha-D-GlcNAc-diphospho-di-trans,poly-cis-dolichol + 2 GDP + 2 H(+). Its pathway is protein modification; protein glycosylation. Its function is as follows. GDP-Man:Man(3)GlcNAc(2)-PP-Dol alpha-1,2-mannosyltransferase that operates in the biosynthetic pathway of dolichol-linked oligosaccharides, the glycan precursors employed in protein asparagine (N)-glycosylation. The assembly of dolichol-linked oligosaccharides begins on the cytosolic side of the endoplasmic reticulum membrane and finishes in its lumen. The sequential addition of sugars to dolichol pyrophosphate produces dolichol-linked oligosaccharides containing fourteen sugars, including two GlcNAcs, nine mannoses and three glucoses. Once assembled, the oligosaccharide is transferred from the lipid to nascent proteins by oligosaccharyltransferases. Catalyzes, on the cytoplasmic face of the endoplasmic reticulum, the addition of the fourth and fifth mannose residues to the dolichol-linked oligosaccharide chain, to produce Man(5)GlcNAc(2)-PP-dolichol core oligosaccharide. The polypeptide is GDP-Man:Man(3)GlcNAc(2)-PP-Dol alpha-1,2-mannosyltransferase (ALG11) (Candida albicans (strain SC5314 / ATCC MYA-2876) (Yeast)).